We begin with the raw amino-acid sequence, 359 residues long: WW domain-binding protein wbp-11 (359 aa).

3 disordered regions span residues 1-38, 235-264, and 317-341; these read MPSI…DRQQ, PSSY…NPMG, and PGDN…QKQA. A compositionally biased stretch (basic and acidic residues) spans 8–27; the sequence is KSGERYRAPTDQARKMDRKK. The span at 245–256 shows a compositional bias: basic residues; sequence MPHHHHHHHPHA.

Functionally, activates pre-mRNA splicing. May inhibit PP1 phosphatase activity. The sequence is that of WW domain-binding protein wbp-11 from Caenorhabditis elegans.